The chain runs to 104 residues: L-rhamnose mutarotase (104 aa).

Tyrosine 18 provides a ligand contact to substrate. The active-site Proton donor is the histidine 22. Substrate-binding positions include tyrosine 41 and 76-77; that span reads WW.

It belongs to the rhamnose mutarotase family. As to quaternary structure, homodimer.

The protein localises to the cytoplasm. It carries out the reaction alpha-L-rhamnose = beta-L-rhamnose. It participates in carbohydrate metabolism; L-rhamnose metabolism. Involved in the anomeric conversion of L-rhamnose. The chain is L-rhamnose mutarotase from Escherichia coli O17:K52:H18 (strain UMN026 / ExPEC).